The chain runs to 947 residues: Valine--tRNA ligase (947 aa).

Positions 45–55 (PNVTGSLHMGH) match the 'HIGH' region motif. The short motif at 591–595 (KMSKS) is the 'KMSKS' region element. An ATP-binding site is contributed by Lys-594.

It belongs to the class-I aminoacyl-tRNA synthetase family. ValS type 1 subfamily. Monomer.

The protein localises to the cytoplasm. It catalyses the reaction tRNA(Val) + L-valine + ATP = L-valyl-tRNA(Val) + AMP + diphosphate. In terms of biological role, catalyzes the attachment of valine to tRNA(Val). As ValRS can inadvertently accommodate and process structurally similar amino acids such as threonine, to avoid such errors, it has a 'posttransfer' editing activity that hydrolyzes mischarged Thr-tRNA(Val) in a tRNA-dependent manner. In Rhizobium meliloti (strain 1021) (Ensifer meliloti), this protein is Valine--tRNA ligase.